The primary structure comprises 56 residues: Large ribosomal subunit protein bL32 (56 aa).

The disordered stretch occupies residues 1-35 (MAVQQNKPTRSKRGMRRSHDALTATHVSVDKTSGE).

This sequence belongs to the bacterial ribosomal protein bL32 family.

The polypeptide is Large ribosomal subunit protein bL32 (Proteus mirabilis (strain HI4320)).